The chain runs to 727 residues: Adhesion G protein-coupled receptor L4 (727 aa).

Positions 1–19 (MKLLLFAAWFSSLLDPCRF) are cleaved as a signal peptide. The Extracellular portion of the chain corresponds to 20-467 (LDICQSCHPN…LAHYNVLTRI (448 aa)). In terms of domain architecture, EGF-like 1; calcium-binding spans 52 to 90 (DDNECETVPEICGLHANCTNYVGGYYCNCLSGFISNGTE). Disulfide bonds link Cys56-Cys69, Cys63-Cys78, Cys106-Cys118, Cys112-Cys127, Cys408-Cys438, and Cys426-Cys440. An EGF-like 2; calcium-binding domain is found at 102 to 139 (DINECEEDRKCGPNSKCHNNIGSFICSCLRGYTSPAGP). The region spanning 282–456 (TQMQVHAGDV…AILMSSARAN (175 aa)) is the GAIN-B domain. The segment at 408-456 (CAFWEYSPSMMGHWSLDGCIRTRVNTTHTSCSCNHLTHFAILMSSARAN) is GPS. A helical transmembrane segment spans residues 468 to 488 (TQLGMVISLICLSMCIFTFWF). Residues 489–496 (FRDIQNTR) are Cytoplasmic-facing. The chain crosses the membrane as a helical span at residues 497 to 517 (TTIHKNLCCSLFMAQFIFLIG). The Extracellular portion of the chain corresponds to 518-535 (INKSAHKWFCSLIAGLLH). A helical transmembrane segment spans residues 536–556 (YFFLAAFAWMCIEGIHLYLIV). Over 557–568 (VGVIYNKGFLHR) the chain is Cytoplasmic. The helical transmembrane segment at 569–589 (NFYAFGYGSPAVVVAISATLG) threads the bilayer. Residues 590–609 (YKYYGTSSVCWLSTENNFIW) lie on the Extracellular side of the membrane. The helical transmembrane segment at 610 to 630 (SFIGPAILIILVNLLAFAVII) threads the bilayer. At 631–654 (YKVYRHTAVKKPEISHYENIRSCA) the chain is on the cytoplasmic side. Residues 655–675 (RGAIALLFVLGVTWAFGVMYI) form a helical membrane-spanning segment. The Extracellular segment spans residues 676–682 (LYETTLT). The chain crosses the membrane as a helical span at residues 683-703 (AYLFTFANVFQGMFIFIFLCV).

Belongs to the G-protein coupled receptor 2 family. Adhesion G-protein coupled receptor (ADGR) subfamily. As to quaternary structure, heterodimer of 2 chains generated by proteolytic processing; the large extracellular N-terminal fragment and the membrane-bound C-terminal fragment predominantly remain associated and non-covalently linked. In terms of processing, autoproteolytically processed at the GPS region of the GAIN-B domain; this cleavage modulates receptor activity.

It is found in the cell membrane. In terms of biological role, orphan receptor that plays a role in vessel formation. The chain is Adhesion G protein-coupled receptor L4 from Danio rerio (Zebrafish).